Here is a 443-residue protein sequence, read N- to C-terminus: 26S proteasome regulatory subunit 4 homolog B (443 aa).

Disordered regions lie at residues 1-55 and 87-108; these read MGQG…LPTV and RLKP…LRGT. 2 stretches are compositionally biased toward basic and acidic residues: residues 12–28 and 87–106; these read QGDR…KKFE and RLKP…DDLR. Residue 229 to 236 participates in ATP binding; it reads GEPGTGKT. Residues Lys296 and Lys433 each participate in a glycyl lysine isopeptide (Lys-Gly) (interchain with G-Cter in ubiquitin) cross-link.

It belongs to the AAA ATPase family. As to quaternary structure, component of the 19S regulatory particle (RP/PA700) base subcomplex of the 26S proteasome. The 26S proteasome is composed of a core protease (CP), known as the 20S proteasome, capped at one or both ends by the 19S regulatory particle (RP/PA700). The RP/PA700 complex is composed of at least 17 different subunits in two subcomplexes, the base and the lid, which form the portions proximal and distal to the 20S proteolytic core, respectively. Preferentially expressed in the root and shoot apical meristem.

It localises to the cytoplasm. The protein resides in the nucleus. Functionally, the 26S protease is involved in the ATP-dependent degradation of ubiquitinated proteins. The regulatory (or ATPase) complex confers ATP dependency and substrate specificity to the 26S complex. Acts redundantly with RPT2A in the regulation of gametogenesis. With RPT2A plays a critical role in 26S proteasome assembly. The polypeptide is 26S proteasome regulatory subunit 4 homolog B (Arabidopsis thaliana (Mouse-ear cress)).